Reading from the N-terminus, the 296-residue chain is tRNA dimethylallyltransferase (296 aa).

11–18 serves as a coordination point for ATP; sequence GPTAVGKT. 13 to 18 provides a ligand contact to substrate; the sequence is TAVGKT. The interval 36-39 is interaction with substrate tRNA; sequence DSQQ.

The protein belongs to the IPP transferase family. Monomer. Mg(2+) serves as cofactor.

It catalyses the reaction adenosine(37) in tRNA + dimethylallyl diphosphate = N(6)-dimethylallyladenosine(37) in tRNA + diphosphate. In terms of biological role, catalyzes the transfer of a dimethylallyl group onto the adenine at position 37 in tRNAs that read codons beginning with uridine, leading to the formation of N6-(dimethylallyl)adenosine (i(6)A). The polypeptide is tRNA dimethylallyltransferase (Streptococcus agalactiae serotype Ia (strain ATCC 27591 / A909 / CDC SS700)).